A 944-amino-acid polypeptide reads, in one-letter code: Respiratory burst oxidase homolog protein F (944 aa).

Residues 2-387 are Cytoplasmic-facing; sequence KPFSKNDRRR…VYIMQENWKR (386 aa). Coiled-coil stretches lie at residues 102-126 and 157-184; these read QFSQ…KRFS and LEAR…RGLR. EF-hand-like regions lie at residues 207-215 and 241-252; these read EKNGYIYRS and RRLKVEKINHDE. EF-hand domains are found at residues 264 to 299 and 308 to 343; these read SFDS…SASA and QAEE…KDTY. Aspartate 277, asparagine 279, aspartate 281, arginine 283, glutamate 288, aspartate 321, and tyrosine 327 together coordinate Ca(2+). Residues serine 354 and serine 358 each carry the phosphoserine modification. Residues 388 to 408 traverse the membrane as a helical segment; that stretch reads IWVLSLWIMIMIGLFLWKFFQ. Residues 409-475 are Extracellular-facing; that stretch reads YKQKDAFHVM…INFHKTIAGA (67 aa). Positions 426 to 583 constitute a Ferric oxidoreductase domain; it reads KGAAETLKFN…LFVIVYILLI (158 aa). The helical transmembrane segment at 476-492 threads the bilayer; the sequence is IVVAVILHIGDHLACDF. Residues 493 to 527 lie on the Cytoplasmic side of the membrane; it reads PRIVRATEYDYNRYLFHYFQTKQPTYFDLVKGPEG. Residues 528–548 traverse the membrane as a helical segment; sequence ITGILMVILMIISFTLATRWF. At 549–570 the chain is on the extracellular side; the sequence is RRNLVKLPKPFDRLTGFNAFWY. A helical membrane pass occupies residues 571 to 591; that stretch reads SHHLFVIVYILLILHGIFLYF. Residues 592–599 are Cytoplasmic-facing; the sequence is AKPWYVRT. Residues 600-617 form a helical membrane-spanning segment; the sequence is TWMYLAVPVLLYGGERTL. Residues 618–744 are Extracellular-facing; sequence RYFRSGSYSV…PYGAPAQDYR (127 aa). The FAD-binding FR-type domain maps to 622 to 742; sequence SGSYSVRLLK…DGPYGAPAQD (121 aa). Residues 745–765 form a helical membrane-spanning segment; sequence KYDVLLLVGLGIGATPFISIL. Topologically, residues 766–944 are cytoplasmic; it reads KDLLNNIVKM…TKFEFHKEHF (179 aa).

Belongs to the RBOH (TC 5.B.1.3) family. Monomer and homodimer. Interacts (via N-terminus) with CIPK26. Interacts (via N-terminus) with SRC2. Not glycosylated. Phosphorylated by CIPK26. As to expression, expressed in roots, stems, seedlings, inflorescences, leaves and guard cells.

The protein localises to the cell membrane. Its activity is regulated as follows. Inhibited by diphenylene iodonium (DPI). In terms of biological role, calcium-dependent NADPH oxidase that generates superoxide. Generates reactive oxygen species (ROS) during incompatible interactions with pathogens and is important in the regulation of the hypersensitive response (HR). Involved in abscisic acid-induced stomatal closing and in UV-B and abscisic acid ROS-dependent signaling. In Arabidopsis thaliana (Mouse-ear cress), this protein is Respiratory burst oxidase homolog protein F (RBOHF).